A 306-amino-acid chain; its full sequence is Glutamyl-Q tRNA(Asp) synthetase (306 aa).

L-glutamate contacts are provided by residues 4–8 (RYAPS) and glutamate 40. The 'HIGH' region motif lies at 7–17 (PSPSGDLHFGN). Zn(2+) contacts are provided by cysteine 92, cysteine 94, tyrosine 113, and cysteine 117. Tyrosine 180 and arginine 198 together coordinate L-glutamate. Residues 236-240 (RLAKR) carry the 'KMSKS' region motif. Lysine 239 serves as a coordination point for ATP.

The protein belongs to the class-I aminoacyl-tRNA synthetase family. GluQ subfamily. Zn(2+) is required as a cofactor.

In terms of biological role, catalyzes the tRNA-independent activation of glutamate in presence of ATP and the subsequent transfer of glutamate onto a tRNA(Asp). Glutamate is transferred on the 2-amino-5-(4,5-dihydroxy-2-cyclopenten-1-yl) moiety of the queuosine in the wobble position of the QUC anticodon. The polypeptide is Glutamyl-Q tRNA(Asp) synthetase (Corynebacterium efficiens (strain DSM 44549 / YS-314 / AJ 12310 / JCM 11189 / NBRC 100395)).